We begin with the raw amino-acid sequence, 303 residues long: Coenzyme PQQ synthesis protein B (303 aa).

The protein belongs to the PqqB family.

Its pathway is cofactor biosynthesis; pyrroloquinoline quinone biosynthesis. May be involved in the transport of PQQ or its precursor to the periplasm. The chain is Coenzyme PQQ synthesis protein B from Pseudomonas putida (strain W619).